Here is a 252-residue protein sequence, read N- to C-terminus: O-methyltransferase hkm8 (252 aa).

Residues E73, 75–76 (GT), S81, and D100 each bind S-adenosyl-L-methionine.

Belongs to the class I-like SAM-binding methyltransferase superfamily. Cation-dependent O-methyltransferase family.

The protein operates within secondary metabolite biosynthesis. Its function is as follows. O-methyltransferase; part of the gene cluster that mediates the biosynthesis of hancockiamides, an unusual new family of N-cinnamoylated piperazines. The NRPS hkm10 and the NmrA-like reductase hkm9 are proposed to convert two molecules of L-Phe to the intermediary piperazine called xenocockiamide A. Xenocockiamide A is then converted to hancockiamide D via a series of hydroxylations and O-methylations. The tyrosinase hkm6 may catalyze an aromatic hydroxylation, then the 2-oxoglutarate-dependent Fe(II) dioxygenase hkm4 and the FAD-dependent phenol hydroxylase hkm7 may catalyze consecutive hydroxylations to install 2 more hydroxy groups, and the methyltransferase hkm8 probably catalyzes two methylations using 2 molecules of S-adenosyl-L-methionine (SAM). The NRPS hkm11 activates and transfers trans-cinnamate supplied by the PAL hkm12 to hancockiamide D and produces hancockiamide A. NRPS Hkm11 has the flexibility to tolerate the bulky hancockiamide G as a substrate and the absence of the acetyl-transferase hkm3 opens up the opportunity for hkm11 to introduce a second N-cinnamoyl moiety. The cytochrome P450 monooxygenase hkm5 catalyzes the methylenedioxy bridge formation, converting hancockiamide A into hancockiamide G. Hkm5 can also convert hancockiamide B into hancockiamide C, and hancockiamide D into hancockiamide H. The N-acetyltransferase hkm3 finally transfers an acetyl group to 1-N of piperazine, converting hancockiamide A into hancockiamide B and hancockiamide G into hancockiamide C. The chain is O-methyltransferase hkm8 from Aspergillus hancockii.